The following is a 429-amino-acid chain: Enolase (429 aa).

Gln163 is a (2R)-2-phosphoglycerate binding site. The active-site Proton donor is Glu205. Mg(2+) contacts are provided by Asp242, Glu287, and Asp314. Residues Lys339, Arg368, Ser369, and Lys390 each coordinate (2R)-2-phosphoglycerate. Lys339 serves as the catalytic Proton acceptor.

The protein belongs to the enolase family. Requires Mg(2+) as cofactor.

It is found in the cytoplasm. Its subcellular location is the secreted. It localises to the cell surface. It catalyses the reaction (2R)-2-phosphoglycerate = phosphoenolpyruvate + H2O. The protein operates within carbohydrate degradation; glycolysis; pyruvate from D-glyceraldehyde 3-phosphate: step 4/5. Its function is as follows. Catalyzes the reversible conversion of 2-phosphoglycerate (2-PG) into phosphoenolpyruvate (PEP). It is essential for the degradation of carbohydrates via glycolysis. The sequence is that of Enolase from Anaeromyxobacter dehalogenans (strain 2CP-1 / ATCC BAA-258).